Reading from the N-terminus, the 87-residue chain is Small ribosomal subunit protein bS20 (87 aa).

Residues 1–11 show a composition bias toward basic residues; that stretch reads MANIKSAKKRA. The segment at 1–27 is disordered; sequence MANIKSAKKRAVQSEKRRQHNASQRSM.

The protein belongs to the bacterial ribosomal protein bS20 family.

Binds directly to 16S ribosomal RNA. In Histophilus somni (strain 129Pt) (Haemophilus somnus), this protein is Small ribosomal subunit protein bS20.